The following is an 846-amino-acid chain: Homeodomain-interacting protein kinase 1 (846 aa).

The disordered stretch occupies residues 47–74 (NPFSIQKAPGTSSDNEQRAPKRRADEEA). A compositionally biased stretch (basic and acidic residues) spans 61–72 (NEQRAPKRRADE). Residues 147–483 (YEVLEFLGKG…PAEGLESKFV (337 aa)) enclose the Protein kinase domain. ATP-binding positions include 153 to 161 (LGKGTFGQV) and lysine 176. The Proton acceptor role is filled by aspartate 272. The tract at residues 741 to 790 (LAAQPKKNSPAPSVITLSSDEDSNGAGSSNSGSTTRTGAVNPVRNDTLPM) is disordered. Residues 746–757 (KKNSPAPSVITL) are compositionally biased toward polar residues. Over residues 764 to 773 (NGAGSSNSGS) the composition is skewed to low complexity.

Belongs to the protein kinase superfamily. CMGC Ser/Thr protein kinase family. HIPK subfamily. Broadly expressed during embryogenesis. Expression becomes more restricted during larval development. L3 larvae display robust expression in many head and motor neurons, and lower levels of expression in the intestine and the seam cells of the hypodermis. By late L4 stage, expression is largely restricted to neurons and is maintained in nerve cells of the head and nerve cord during adulthood. Expressed in adult pharyngeal cells, hypodermal cells, gonadal sheath cells and distal tip cells but not in germline cells. Expressed in serotonergic neurons such as ADF and NSM and in GABAergic neurons, including RME, RIS and DVB.

Its subcellular location is the nucleus. It catalyses the reaction L-seryl-[protein] + ATP = O-phospho-L-seryl-[protein] + ADP + H(+). It carries out the reaction L-threonyl-[protein] + ATP = O-phospho-L-threonyl-[protein] + ADP + H(+). Functionally, serine/threonine-protein kinase required in the somatic gonadal cells to regulate germline proliferation during larval development and in adulthood. Plays a role in the development/differentiation of gonadal distal tip cells. Required for normal lifespan in a pha-4 and mxl-2-dependent manner. Also contributes to survival following heat or oxidative stress. Prevents sumoylation and inactivation of heat shock transcription factor hsf-1 which enhances hsf-1-dependent transcriptional induction of chaperones in response to heat shock. Also required for hormetic extension of longevity in response to heat stress. Also contributes to longevity by promoting autophagy under nutrient stress conditions through induction of autophagosome formation and autophagy gene expression. Provides protection against proteotoxic polyglutamine aggregate and the associated locomotory toxicity, probably as a result of kinase activity. Contributes to longevity via gamma-aminobutyric acid (GABA)ergic signaling by promoting autophagy through mxl-2, hlh-30 and daf-16 but independent of hsf-1 and phas-4, to induce autophagosome formation and the expression of autophagy genes. Promotes thermotolerance via serotonergic signaling by serotonergic neurons. Preserves neuronal function in aging animals by mitigating against age-associated decline in axonal and synaptic transmissions. Acts as an activator of nhr-49-dependent hypoxia response, including the up-regulation of fmo-2 and acs-2, the induction of autophagosome formation and expression of autophagy genes. In Caenorhabditis elegans, this protein is Homeodomain-interacting protein kinase 1.